The primary structure comprises 1486 residues: Phosphatidylinositol 3-kinase C2 domain-containing subunit gamma (1486 aa).

The region spanning 285–371 is the PI3K-RBD domain; that stretch reads KTKFNIHIFI…IQLHLQKSRE (87 aa). The C2 PI3K-type domain maps to 521–669; it reads LPSHLSFTVY…SPVTLQIDFP (149 aa). One can recognise a PIK helical domain in the interval 684–860; sequence RSNLEEPLKE…QKLLAALQFC (177 aa). The 279-residue stretch at 929–1207 folds into the PI3K/PI4K catalytic domain; it reads DHDACSYFTS…KIKESLECFP (279 aa). Residues 935–941 form a G-loop region; the sequence is YFTSNAL. Residues 1071–1079 are catalytic loop; it reads GVCDRHNDN. Positions 1090 to 1116 are activation loop; sequence HIDFGKFLGHAQTFGGIKRDRAPFIFT. In terms of domain architecture, PX spans 1240-1352; that stretch reads LSTTRSIERA…SFFLSEAVQQ (113 aa). Residues 1369–1486 enclose the C2 domain; the sequence is KKPKVQLVIS…KWYPLGNSII (118 aa).

This sequence belongs to the PI3/PI4-kinase family. In terms of tissue distribution, highly expressed in liver, prostate and testis. Lower levels in small intestine, kidney and pancreas.

It localises to the membrane. The enzyme catalyses a 1,2-diacyl-sn-glycero-3-phospho-(1D-myo-inositol 4-phosphate) + ATP = a 1,2-diacyl-sn-glycero-3-phospho-(1D-myo-inositol-3,4-bisphosphate) + ADP + H(+). It catalyses the reaction a 1,2-diacyl-sn-glycero-3-phospho-(1D-myo-inositol) + ATP = a 1,2-diacyl-sn-glycero-3-phospho-(1D-myo-inositol-3-phosphate) + ADP + H(+). In terms of biological role, generates phosphatidylinositol 3-phosphate (PtdIns3P) and phosphatidylinositol 3,4-bisphosphate (PtdIns(3,4)P2) that act as second messengers. May play a role in SDF1A-stimulated chemotaxis. The protein is Phosphatidylinositol 3-kinase C2 domain-containing subunit gamma (PIK3C2G) of Homo sapiens (Human).